The primary structure comprises 60 residues: Large ribosomal subunit protein uL30 (60 aa).

The protein belongs to the universal ribosomal protein uL30 family. As to quaternary structure, part of the 50S ribosomal subunit.

The protein is Large ribosomal subunit protein uL30 of Dechloromonas aromatica (strain RCB).